The following is a 104-amino-acid chain: Large ribosomal subunit protein uL24 (104 aa).

It belongs to the universal ribosomal protein uL24 family. As to quaternary structure, part of the 50S ribosomal subunit.

Its function is as follows. One of two assembly initiator proteins, it binds directly to the 5'-end of the 23S rRNA, where it nucleates assembly of the 50S subunit. Functionally, one of the proteins that surrounds the polypeptide exit tunnel on the outside of the subunit. This is Large ribosomal subunit protein uL24 from Aliivibrio fischeri (strain ATCC 700601 / ES114) (Vibrio fischeri).